Consider the following 663-residue polypeptide: Transforming growth factor beta activator LRRC32 (663 aa).

An N-terminal signal peptide occupies residues 1 to 17; it reads MSHQILLLLAMLTLGLA. At 18 to 628 the chain is on the extracellular side; it reads ISQRREQVPC…CEKGGLKNVN (611 aa). In terms of domain architecture, LRRNT spans 22-49; it reads REQVPCRTVNKEALCHGLGLLQVPSVLS. 10 LRR repeats span residues 49 to 72, 73 to 96, 98 to 123, 125 to 148, 149 to 172, 174 to 196, 197 to 220, 222 to 241, 243 to 267, and 269 to 287; these read SLDIQALYLSGNQLQSILVSPLGF, YTALRHLDLSDNQISFLQAGVFQA, PYLEHLNLAHNRLATGMALNSGGLGR, PLLVSLDLSGNSLHGNLVERLLGE, TPRLRTLSLAENSLTRLARHTFWG, PAVEQLDLHSNVLMDIEDGAFEA, LPHLTHLNLSRNSLTCISDFSLQQ, QVLDLSCNSIEAFQTAPEPQ, QFQLAWLDLRENKLLHFPDLAVFPR, and IYLNVSNNLIQLPAGLPRG. Asn204 carries N-linked (GlcNAc...) asparagine glycosylation. N-linked (GlcNAc...) asparagine glycans are attached at residues Asn272, Asn305, and Asn309. Positions 291-311 are disordered; it reads LHAPSEGWSASPLSNPSRNAS. Residues 301–311 show a composition bias toward polar residues; it reads SPLSNPSRNAS. LRR repeat units lie at residues 315–338, 340–362, 363–386, 387–409, 411–433, 443–466, 468–489, 491–514, 515–539, 541–559, and 561–584; these read LSQLLNLDLSYNEIELVPASFLEH, TSLRFLNLSRNCLRSFEARQVDS, LPCLVLLDLSHNVLEALELGTKVL, GSLQTLLLQDNALQELPPYTFAS, ASLQRLNLQGNQVSPCGGPAEPG, IPTLHVLNMAGNSMGMLRAGSFLH, PLTELDLSTNPGLDVATGALVG, EASLEVLELQGNGLTVLRVDLPCF, LRLKRLNLAENQLSHLPAWTRAVSL, VLDLRNNSFSLLPGNAMGG, and ETSLRRLYLQGNPLSCCGNGWLAA. N-linked (GlcNAc...) asparagine glycosylation is present at Asn346. Residue Asn546 is glycosylated (N-linked (GlcNAc...) asparagine). One can recognise an LRRCT domain in the interval 572–621; it reads NPLSCCGNGWLAAQLHQGRVDVDATQDLICRFGSQEELSLSLVRPEDCEK. The chain crosses the membrane as a helical span at residues 629 to 649; sequence LILLLSFTLVSAIVLTTLATI. Over 650–663 the chain is Cytoplasmic; sequence CFLRRQKLSQQYKA.

The protein belongs to the LRRC32/LRRC33 family. Interacts with TGFB1; associates via disulfide bonds with the Latency-associated peptide chain (LAP) regulatory chain of TGFB1, leading to regulate activation of TGF-beta-1. Interacts with TGFB2. Interacts with TGFB3; associates via disulfide bonds with the Latency-associated peptide chain (LAP) regulatory chain of TGFB3, leading to regulate activation of TGF-beta-3. Interacts with LAPTM4B; decreases TGFB1 production in regulatory T-cells. As to expression, present in medial edge epithelial cells at 14.5 dpc (at protein level).

It is found in the cell membrane. Its subcellular location is the cell surface. Functionally, key regulator of transforming growth factor beta (TGFB1, TGFB2 and TGFB3) that controls TGF-beta activation by maintaining it in a latent state during storage in extracellular space. Associates specifically via disulfide bonds with the Latency-associated peptide (LAP), which is the regulatory chain of TGF-beta, and regulates integrin-dependent activation of TGF-beta. Able to outcompete LTBP1 for binding to LAP regulatory chain of TGF-beta. Controls activation of TGF-beta-1 (TGFB1) on the surface of activated regulatory T-cells (Tregs). Required for epithelial fusion during palate development by regulating activation of TGF-beta-3 (TGFB3). The polypeptide is Transforming growth factor beta activator LRRC32 (Mus musculus (Mouse)).